The following is a 258-amino-acid chain: Type III pantothenate kinase (258 aa).

6 to 13 serves as a coordination point for ATP; it reads DVGNTNTV. Substrate-binding positions include Tyr100 and 107–110; that span reads GADR. Asp109 acts as the Proton acceptor in catalysis. Asp129 is a K(+) binding site. Thr132 provides a ligand contact to ATP. Thr184 is a binding site for substrate.

It belongs to the type III pantothenate kinase family. Homodimer. NH4(+) serves as cofactor. It depends on K(+) as a cofactor.

It localises to the cytoplasm. The enzyme catalyses (R)-pantothenate + ATP = (R)-4'-phosphopantothenate + ADP + H(+). It participates in cofactor biosynthesis; coenzyme A biosynthesis; CoA from (R)-pantothenate: step 1/5. Functionally, catalyzes the phosphorylation of pantothenate (Pan), the first step in CoA biosynthesis. The polypeptide is Type III pantothenate kinase (Geobacillus kaustophilus (strain HTA426)).